We begin with the raw amino-acid sequence, 487 residues long: N-succinylglutamate 5-semialdehyde dehydrogenase (487 aa).

221–226 (GSSDTG) contributes to the NAD(+) binding site. Active-site residues include E244 and C278.

Belongs to the aldehyde dehydrogenase family. AstD subfamily.

It carries out the reaction N-succinyl-L-glutamate 5-semialdehyde + NAD(+) + H2O = N-succinyl-L-glutamate + NADH + 2 H(+). Its pathway is amino-acid degradation; L-arginine degradation via AST pathway; L-glutamate and succinate from L-arginine: step 4/5. Catalyzes the NAD-dependent reduction of succinylglutamate semialdehyde into succinylglutamate. This is N-succinylglutamate 5-semialdehyde dehydrogenase from Burkholderia ambifaria (strain ATCC BAA-244 / DSM 16087 / CCUG 44356 / LMG 19182 / AMMD) (Burkholderia cepacia (strain AMMD)).